The sequence spans 689 residues: Elongation factor G (689 aa).

The 275-residue stretch at 9-283 folds into the tr-type G domain; that stretch reads AKFRNIGIMA…AIIEFMPSPL (275 aa). GTP contacts are provided by residues 18 to 25, 82 to 86, and 136 to 139; these read AHIDAGKT, DTPGH, and NKMD.

This sequence belongs to the TRAFAC class translation factor GTPase superfamily. Classic translation factor GTPase family. EF-G/EF-2 subfamily.

It localises to the cytoplasm. In terms of biological role, catalyzes the GTP-dependent ribosomal translocation step during translation elongation. During this step, the ribosome changes from the pre-translocational (PRE) to the post-translocational (POST) state as the newly formed A-site-bound peptidyl-tRNA and P-site-bound deacylated tRNA move to the P and E sites, respectively. Catalyzes the coordinated movement of the two tRNA molecules, the mRNA and conformational changes in the ribosome. This chain is Elongation factor G, found in Clostridium botulinum (strain Okra / Type B1).